Reading from the N-terminus, the 108-residue chain is Ig kappa chain V-V region MOPC 149 (108 aa).

Positions 1 to 23 (DIQMTQSPDYLSASVGETVTITC) are framework-1. A disulfide bridge links cysteine 23 with cysteine 88. Residues 24 to 34 (RASENIYSYLA) are complementarity-determining-1. The framework-2 stretch occupies residues 35–49 (WYQQKQGKSPQLLVY). The complementarity-determining-2 stretch occupies residues 50 to 56 (DAKTLVE). The tract at residues 57–88 (GVPSRFSGSGSGTQFSLKINSLQPEDFGSYYC) is framework-3. Residues 89–97 (QHHYGIPFT) form a complementarity-determining-3 region. Residues 98–108 (FGSGTKLEIKR) are framework-4.

The protein is Ig kappa chain V-V region MOPC 149 of Mus musculus (Mouse).